Reading from the N-terminus, the 501-residue chain is Aldehyde dehydrogenase 1A1 (501 aa).

S2 carries the N-acetylserine modification. N6-acetyllysine occurs at positions 91 and 128. Residues 167–170 (IPWN), 193–196 (KPAE), 226–227 (GP), and 246–247 (GS) each bind NAD(+). At K252 the chain carries N6-acetyllysine. Residue E269 is the Proton acceptor of the active site. An NAD(+)-binding site is contributed by 269 to 271 (ELG). C303 serves as the catalytic Nucleophile. The interval 336–501 (LTQGINQGPQ…VAMKISQKNS (166 aa)) is mediates interaction with PRMT3. T337 carries the post-translational modification Phosphothreonine. 349-353 (EQHDK) contributes to the NAD(+) binding site. 2 positions are modified to N6-acetyllysine: K353 and K367. 400–402 (EIF) provides a ligand contact to NAD(+). N6-acetyllysine is present on K410. Phosphoserine is present on S413. 3 positions are modified to N6-acetyllysine: K419, K435, and K495.

The protein belongs to the aldehyde dehydrogenase family. As to quaternary structure, homotetramer. Interacts with PRMT3; the interaction is direct, inhibits ALDH1A1 aldehyde dehydrogenase activity and is independent of the methyltransferase activity of PRMT3. Post-translationally, the N-terminus is blocked most probably by acetylation. In terms of tissue distribution, strongly expressed in kidney, lung, testis, intestine, stomach, and trachea, but weakly in the liver.

The protein localises to the cytoplasm. It is found in the cytosol. It localises to the cell projection. The protein resides in the axon. The enzyme catalyses an aldehyde + NAD(+) + H2O = a carboxylate + NADH + 2 H(+). The catalysed reaction is all-trans-retinal + NAD(+) + H2O = all-trans-retinoate + NADH + 2 H(+). It catalyses the reaction 9-cis-retinal + NAD(+) + H2O = 9-cis-retinoate + NADH + 2 H(+). It carries out the reaction 11-cis-retinal + NAD(+) + H2O = 11-cis-retinoate + NADH + 2 H(+). The enzyme catalyses 13-cis-retinal + NAD(+) + H2O = 13-cis-retinoate + NADH + 2 H(+). The catalysed reaction is 3-deoxyglucosone + NAD(+) + H2O = 2-dehydro-3-deoxy-D-gluconate + NADH + 2 H(+). It catalyses the reaction (E)-4-hydroxynon-2-enal + NAD(+) + H2O = (E)-4-hydroxynon-2-enoate + NADH + 2 H(+). It carries out the reaction malonaldehyde + NAD(+) + H2O = 3-oxopropanoate + NADH + 2 H(+). The enzyme catalyses hexanal + NAD(+) + H2O = hexanoate + NADH + 2 H(+). The catalysed reaction is propanal + NAD(+) + H2O = propanoate + NADH + 2 H(+). It catalyses the reaction acetaldehyde + NAD(+) + H2O = acetate + NADH + 2 H(+). It carries out the reaction benzaldehyde + NAD(+) + H2O = benzoate + NADH + 2 H(+). The enzyme catalyses 4-aminobutanal + NAD(+) + H2O = 4-aminobutanoate + NADH + 2 H(+). Its pathway is cofactor metabolism; retinol metabolism. Inhibited by chloral hydrate. Functionally, cytosolic dehydrogenase that catalyzes the irreversible oxidation of a wide range of aldehydes to their corresponding carboxylic acid. Functions downstream of retinol dehydrogenases and catalyzes the oxidation of retinaldehyde into retinoic acid, the second step in the oxidation of retinol/vitamin A into retinoic acid. This pathway is crucial to control the levels of retinol and retinoic acid, two important molecules which excess can be teratogenic and cytotoxic. Also oxidizes aldehydes resulting from lipid peroxidation like (E)-4-hydroxynon-2-enal/HNE, malonaldehyde and hexanal that form protein adducts and are highly cytotoxic. By participating for instance to the clearance of (E)-4-hydroxynon-2-enal/HNE in the lens epithelium prevents the formation of HNE-protein adducts and lens opacification. Functions also downstream of fructosamine-3-kinase in the fructosamine degradation pathway by catalyzing the oxidation of 3-deoxyglucosone, the carbohydrate product of fructosamine 3-phosphate decomposition, which is itself a potent glycating agent that may react with lysine and arginine side-chains of proteins. Also has an aminobutyraldehyde dehydrogenase activity and is probably part of an alternative pathway for the biosynthesis of GABA/4-aminobutanoate in midbrain, thereby playing a role in GABAergic synaptic transmission. The polypeptide is Aldehyde dehydrogenase 1A1 (Rattus norvegicus (Rat)).